Here is a 417-residue protein sequence, read N- to C-terminus: Phosphoglycerate kinase 2 (417 aa).

At serine 2 the chain carries N-acetylserine. Phosphoserine is present on residues serine 2 and serine 4. Residue lysine 11 is modified to N6-acetyllysine. Residues valine 23, aspartate 24, phenylalanine 25, asparagine 26, glutamine 38, and arginine 39 each coordinate (2R)-3-phosphoglycerate. Lysine 48 is subject to N6-acetyllysine. The (2R)-3-phosphoglycerate site is built by serine 62, histidine 63, glycine 65, and arginine 66. N6-acetyllysine occurs at positions 75, 86, and 97. (2R)-3-phosphoglycerate-binding residues include leucine 122 and arginine 123. N6-acetyllysine occurs at positions 131 and 146. (2R)-3-phosphoglycerate-binding residues include histidine 170 and arginine 171. Tyrosine 196 is subject to Phosphotyrosine. Lysine 199 carries the N6-acetyllysine modification. Residue glycine 214 participates in ADP binding. Position 214 (glycine 214) interacts with CDP. Residues alanine 215 and lysine 216 each coordinate AMP. Alanine 215 contributes to the ATP binding site. Alanine 215 is a Mg(2+) binding site. 2 residues coordinate Mg(2+): alanine 218 and aspartate 219. A CDP-binding site is contributed by aspartate 219. Lysine 220 is a binding site for AMP. ATP is bound at residue lysine 220. Residue glycine 238 coordinates ADP. A CDP-binding site is contributed by glycine 238. Glycine 239 is a binding site for AMP. Glycine 239 contacts ATP. Lysine 267 and lysine 291 each carry N6-acetyllysine. Residue glycine 313 coordinates AMP. Glycine 313 is a binding site for ATP. Residues glycine 338 and phenylalanine 343 each contribute to the CDP site. Phenylalanine 343 lines the ADP pocket. AMP is bound at residue glutamate 344. Residues glutamate 344, aspartate 375, and threonine 376 each contribute to the ATP site. Residue aspartate 375 coordinates Mg(2+).

This sequence belongs to the phosphoglycerate kinase family. Monomer. Mg(2+) is required as a cofactor.

The protein localises to the cytoplasm. The catalysed reaction is (2R)-3-phosphoglycerate + ATP = (2R)-3-phospho-glyceroyl phosphate + ADP. The protein operates within carbohydrate degradation; glycolysis; pyruvate from D-glyceraldehyde 3-phosphate: step 2/5. In terms of biological role, essential for sperm motility and male fertility but is not required for the completion of spermatogenesis. The chain is Phosphoglycerate kinase 2 (PGK2) from Macaca fascicularis (Crab-eating macaque).